Consider the following 222-residue polypeptide: Coiled-coil domain-containing protein 70 (222 aa).

Coiled-coil stretches lie at residues 34-62 and 129-188; these read LQEE…WNFR and NALW…KAAW.

The chain is Coiled-coil domain-containing protein 70 (CCDC70) from Bos taurus (Bovine).